A 1171-amino-acid polypeptide reads, in one-letter code: DNA-directed RNA polymerase subunit beta (1171 aa).

The protein belongs to the RNA polymerase beta chain family. The RNAP catalytic core consists of 2 alpha, 1 beta, 1 beta' and 1 omega subunit. When a sigma factor is associated with the core the holoenzyme is formed, which can initiate transcription.

It catalyses the reaction RNA(n) + a ribonucleoside 5'-triphosphate = RNA(n+1) + diphosphate. DNA-dependent RNA polymerase catalyzes the transcription of DNA into RNA using the four ribonucleoside triphosphates as substrates. This chain is DNA-directed RNA polymerase subunit beta, found in Kineococcus radiotolerans (strain ATCC BAA-149 / DSM 14245 / SRS30216).